A 347-amino-acid chain; its full sequence is CD5 antigen-like (347 aa).

The N-terminal stretch at 1-19 is a signal peptide; the sequence is MALLFSLILAICTRPGFLA. SRCR domains follow at residues 24–125, 138–239, and 244–346; these read VRLV…ASCE, VRLA…VECE, and LRLV…VICS. 11 disulfide bridges follow: C33-C67, C49-C114, C62-C124, C96-C106, C163-C228, C176-C238, C208-C218, C253-C287, C269-C335, C282-C345, and C315-C325.

As to quaternary structure, interacts with FASN; the interaction is direct. Interacts (via SRCR2 and SRCR3) with pentameric IgM (via Fc region); disulfide-linked. Post-translationally, not N-glycosylated. Probably not O-glycosylated. In terms of tissue distribution, expressed in spleen, lymph node, thymus, bone marrow, and fetal liver, but not in non-lymphoid tissues.

The protein resides in the secreted. It is found in the cytoplasm. Functionally, secreted protein that acts as a key regulator of lipid synthesis: mainly expressed by macrophages in lymphoid and inflamed tissues and regulates mechanisms in inflammatory responses, such as infection or atherosclerosis. Able to inhibit lipid droplet size in adipocytes. Following incorporation into mature adipocytes via CD36-mediated endocytosis, associates with cytosolic FASN, inhibiting fatty acid synthase activity and leading to lipolysis, the degradation of triacylglycerols into glycerol and free fatty acids (FFA). CD5L-induced lipolysis occurs with progression of obesity: participates in obesity-associated inflammation following recruitment of inflammatory macrophages into adipose tissues, a cause of insulin resistance and obesity-related metabolic disease. Regulation of intracellular lipids mediated by CD5L has a direct effect on transcription regulation mediated by nuclear receptors ROR-gamma (RORC). Acts as a key regulator of metabolic switch in T-helper Th17 cells. Regulates the expression of pro-inflammatory genes in Th17 cells by altering the lipid content and limiting synthesis of cholesterol ligand of RORC, the master transcription factor of Th17-cell differentiation. CD5L is mainly present in non-pathogenic Th17 cells, where it decreases the content of polyunsaturated fatty acyls (PUFA), affecting two metabolic proteins MSMO1 and CYP51A1, which synthesize ligands of RORC, limiting RORC activity and expression of pro-inflammatory genes. Participates in obesity-associated autoimmunity via its association with IgM, interfering with the binding of IgM to Fcalpha/mu receptor and enhancing the development of long-lived plasma cells that produce high-affinity IgG autoantibodies. Also acts as an inhibitor of apoptosis in macrophages: promotes macrophage survival from the apoptotic effects of oxidized lipids in case of atherosclerosis. Involved in early response to microbial infection against various pathogens by acting as a pattern recognition receptor and by promoting autophagy. The sequence is that of CD5 antigen-like (CD5L) from Homo sapiens (Human).